The primary structure comprises 321 residues: Malate dehydrogenase (321 aa).

Residues 10–15 (GAGQIG) and Asp34 each bind NAD(+). Arg83 and Arg89 together coordinate substrate. NAD(+)-binding positions include Asn96 and 119 to 121 (ITN). Substrate-binding residues include Asn121 and Arg152. His176 functions as the Proton acceptor in the catalytic mechanism.

The protein belongs to the LDH/MDH superfamily. MDH type 3 family.

It carries out the reaction (S)-malate + NAD(+) = oxaloacetate + NADH + H(+). In terms of biological role, catalyzes the reversible oxidation of malate to oxaloacetate. The chain is Malate dehydrogenase from Xanthobacter autotrophicus (strain ATCC BAA-1158 / Py2).